We begin with the raw amino-acid sequence, 442 residues long: Meiosis-specific with OB domain-containing protein (442 aa).

Residues 167–272 constitute a DNA-binding region (OB); that stretch reads IINVLAAVKS…EANILLNFIR (106 aa).

Belongs to the MEIOB family. Component of a multiprotein complex with RPA2 and SPATA22. Interacts with SPATA22. Interacts with the complex BRME1:HSF2BP:BRCA2. In fetal gonads, specifically expressed in the ovary starting at the 14th weeks post fertilization. In the adult, restricted to testis.

Its subcellular location is the cytoplasm. It localises to the nucleus. The protein localises to the chromosome. Single-stranded DNA-binding protein required for homologous recombination in meiosis I. Required for double strand breaks (DSBs) repair and crossover formation and promotion of faithful and complete synapsis. Not required for the initial loading of recombinases but required to maintain a proper number of RAD51 and DMC1 foci after the zygotene stage. May act by ensuring the stabilization of recombinases, which is required for successful homology search and meiotic recombination. Displays Single-stranded DNA 3'-5' exonuclease activity in vitro. This Homo sapiens (Human) protein is Meiosis-specific with OB domain-containing protein.